We begin with the raw amino-acid sequence, 489 residues long: MNLNKTLRKNSPSGYKALLTFSIICGLMATGCAHQESLPNSTANSVDRQVGYFADNGVGNPLAIVQHPAGIHKNGITYVSYQGPKEDPYIASYNHQTGQWQGPFRAGISELGRRDGGKKFDNHGKPTMLIDDEGYIHIFYGGHGGQASNGKNPLGNTHHGANKHAVSKRPYDISQWEDLNNITPFGTYNQAIKMDNGDIYLFFRHGAHRSDWVYQKSVDNGRTFASPVSFLKHKRRTDIDAVDSWYAWAGKGQGDNIIVSYDYHVCWDGGAGVNGRGHTTERHDVYFMSFNTKTGEWSNVEGEKLVLPVTREVADEKTMAMRTGELWTFNGSTHLDAQGQPHIAINAGIDKGAKTGGPKQTRHVRWNGNEWVGGDKVIPQYERVSRGDFMVTDPENIRYLTTYNQDNDAVLSWWQSHDGGEHFVEDKTVLRKDNASFAISAFIKDAIPDAQMLVAEKVSDEGIKMYLVGEEGAVTRSLVDLKTAMPTSK.

The N-terminal stretch at 1–31 is a signal peptide; it reads MNLNKTLRKNSPSGYKALLTFSIICGLMATG. A lipid anchor (N-palmitoyl cysteine) is attached at Cys-32. Cys-32 is lipidated: S-diacylglycerol cysteine. The substrate site is built by Asn-60 and Asn-122. His-123 serves as the catalytic Proton donor. Residues Lys-125 and His-143 each contribute to the substrate site. The active-site Proton acceptor is Tyr-188. 3 residues coordinate substrate: Arg-204, His-208, and Tyr-246. Residue His-208 participates in Zn(2+) binding. His-264, Cys-266, and His-278 together coordinate Zn(2+). His-278 is a binding site for substrate.

This sequence belongs to the polysaccharide lyase 25 family.

Its subcellular location is the cell membrane. Functionally, ulvan lyase involved in ulvan degradation. Ulvan is the main polysaccharide component of the Ulvales (green seaweed) cell wall. It is composed of disaccharide building blocks comprising 3-sulfated rhamnose (Rha3S) linked to D-glucuronic acid (GlcA), L-iduronic acid (IduA), or D-xylose (Xyl). Ulvan lyase catalyzes the endolytic cleavage of the glycosidic bond between Rha3S and the uronic acids GlcA or IduA, producing oligosaccharides that have unsaturated 4-deoxy-L-threo-hex-4-enopyranosiduronic acid (deltaUA) at the non-reducing end. This results eventually in the degradation of the ulvan polysaccharide into deltaUA-Rha3S disaccharides and deltaUA-Rha3S-Xyl-Rha3S tetrasaccharides. This chain is Ulvan Lyase-PL25, found in Pseudoalteromonas sp. (strain PLSV).